A 484-amino-acid polypeptide reads, in one-letter code: PTS system MurNAc-GlcNAc-specific EIIBC component (484 aa).

In terms of domain architecture, PTS EIIB type-1 spans 5–87 (QQLAERIIAA…AELSGVKLGD (83 aa)). Cys-27 acts as the Phosphocysteine intermediate; for EIIB activity in catalysis. A PTS EIIC type-1 domain is found at 130–484 (KSIANIFIPL…AMRQTDLLGD (355 aa)). The next 10 membrane-spanning stretches (helical) occupy residues 135 to 155 (IFIP…IAAV), 160 to 180 (MVAG…FNVI), 200 to 220 (FGAT…TGIA), 234 to 254 (LQPG…LSIV), 274 to 294 (IALL…AGFV), 305 to 325 (IISI…LPLV), 349 to 369 (LLPI…ALWV), 384 to 404 (ALPV…TLPL), 408 to 428 (FLTA…IGHI), and 450 to 470 (LGYI…TYLF).

Its subcellular location is the cell membrane. It carries out the reaction N-acetyl-beta-D-muramate-(1-&gt;4)-N-acetyl-D-glucosamine(out) + N(pros)-phospho-L-histidyl-[protein] = 6-phospho-N-acetyl-beta-D-muramate-(1-&gt;4)-N-acetyl-D-glucosamine(in) + L-histidyl-[protein]. It participates in cell wall biogenesis; peptidoglycan recycling. Functionally, the phosphoenolpyruvate-dependent sugar phosphotransferase system (sugar PTS), a major carbohydrate active transport system, catalyzes the phosphorylation of incoming sugar substrates concomitantly with their translocation across the cell membrane. This system is involved in the uptake and phosphorylation of MurNAc-GlcNAc, the principle peptidoglycan turnover product of S.aureus, yielding cytoplasmic MurNAc 6P-GlcNAc. The sequence is that of PTS system MurNAc-GlcNAc-specific EIIBC component from Staphylococcus aureus (strain bovine RF122 / ET3-1).